Here is a 570-residue protein sequence, read N- to C-terminus: MIPPEIRRSVLLQKAIKLALAGTLLTFASFSATAADPSSDTETPQPPDILLGPLFNDVQNAKLFPDQKTFADAIPNSDPLMILADYRMQRNQSGFDLRHFVDVNFTLPKAGEKYVPPAGQSLREHIDGLWPVLTRSTKNVEKWDSLLPLPESYVVPGGRFREIYYWDSYFTMLGLAESEHWDKVADMVANFGYEIDAWGHIPNGNRTYYLSRSQPPFFAFMVELLAQHEGDDALKEYLPQLQKEYAYWMEGVETLQPGQQNQRVVKLEDGSVLNRYWDDRDTPRPESWVEDIATAKSNPNRPATEIYRDLRSAAASGWDFSSRWMDNPQQLSTIRTTTIVPVDLNALLYQLEKTLARASAAAGDRAEASQYDALANARQKAIEMHLWNNKEGWYADYDLKNNKIRDQLTAAALFPLYVNAAAKDRAAKVAAAAQAHLLQPGGLATTSVKSGQQWDAPNGWAPLQWVAAEGLQNYGQDDVAMEVTWRFLTNVQHTYDREKKLVEKYDVSSTGTGGGGGEYPLQDGFGWTNGVTLKMLDLICPQEKPCDSVPSTRPASLSATPTKTPSAATQ.

Residues Met-1–Ala-34 form the signal peptide. Residues Arg-159, Trp-166 to Asp-167, Asn-203, Arg-212 to Gln-214, Arg-284 to Glu-286, and Gly-317 each bind substrate. Residues Asp-319 and Glu-503 each act as proton donor/acceptor in the active site. Glu-518 provides a ligand contact to substrate. Positions Lys-544–Gln-570 are disordered. Residues Pro-554 to Gln-570 show a composition bias toward low complexity.

The protein belongs to the glycosyl hydrolase 37 family. Monomer.

It is found in the periplasm. The catalysed reaction is alpha,alpha-trehalose + H2O = alpha-D-glucose + beta-D-glucose. Functionally, provides the cells with the ability to utilize trehalose at high osmolarity by splitting it into glucose molecules that can subsequently be taken up by the phosphotransferase-mediated uptake system. This is Periplasmic trehalase from Salmonella newport (strain SL254).